Consider the following 256-residue polypeptide: MWLLLTLSFLLASTAAQDGDKLLEGDECAPHSQPWQVALYERGRFNCGASLISPHWVLSAAHCQSRFMRVRLGEHNLRKRDGPEQLRTTSRVIPHPRYEARSHRNDIMLLRLVQPARLNPQVRPAVLPTRCPHPGEACVVSGWGLVSHNEPGTAGSPRSQVSLPDTLHCANISIISDTSCDKSYPGRLTNTMVCAGAEGRGAESCEGDSGGPLVCGGILQGIVSWGDVPCDNTTKPGVYTKVCHYLEWIRETMKRN.

The first 16 residues, 1-16, serve as a signal peptide directing secretion; sequence MWLLLTLSFLLASTAA. The propeptide at 17–21 is activation peptide; that stretch reads QDGDK. Positions 22–254 constitute a Peptidase S1 domain; sequence LLEGDECAPH…YLEWIRETMK (233 aa). Cys47 and Cys63 are oxidised to a cystine. Residues His62 and Asp106 each act as charge relay system in the active site. 3 disulfide bridges follow: Cys138–Cys215, Cys180–Cys194, and Cys205–Cys230. Asn171 carries an N-linked (GlcNAc...) asparagine glycan. Ser209 acts as the Charge relay system in catalysis. Asn232 is a glycosylation site (N-linked (GlcNAc...) asparagine).

It belongs to the peptidase S1 family. Kallikrein subfamily. Highest expression in the thyroid gland. Also expressed in the prostate, salivary, and adrenal glands and in the colon testis and kidney.

The protein resides in the secreted. Protease whose physiological substrate is not yet known. The sequence is that of Kallikrein-15 (KLK15) from Homo sapiens (Human).